The primary structure comprises 273 residues: Large ribosomal subunit protein uL2 (273 aa).

Disordered regions lie at residues 32–53 (PLVEKNSKSGGRNNNGRITTRH) and 221–273 (RGTA…RRSK). Residues 39-48 (KSGGRNNNGR) show a composition bias toward low complexity.

Belongs to the universal ribosomal protein uL2 family. In terms of assembly, part of the 50S ribosomal subunit. Forms a bridge to the 30S subunit in the 70S ribosome.

Its function is as follows. One of the primary rRNA binding proteins. Required for association of the 30S and 50S subunits to form the 70S ribosome, for tRNA binding and peptide bond formation. It has been suggested to have peptidyltransferase activity; this is somewhat controversial. Makes several contacts with the 16S rRNA in the 70S ribosome. The polypeptide is Large ribosomal subunit protein uL2 (Erwinia tasmaniensis (strain DSM 17950 / CFBP 7177 / CIP 109463 / NCPPB 4357 / Et1/99)).